Reading from the N-terminus, the 79-residue chain is Pulmonary surfactant-associated protein B (79 aa).

Residues 4–79 (PLPFCWLCRT…VCGLVLRCSS (76 aa)) enclose the Saposin B-type domain. Disulfide bonds link cysteine 8-cysteine 77, cysteine 11-cysteine 71, and cysteine 35-cysteine 46.

As to quaternary structure, homodimer; disulfide-linked.

The protein resides in the secreted. It is found in the extracellular space. Its subcellular location is the surface film. Its function is as follows. Pulmonary surfactant-associated proteins promote alveolar stability by lowering the surface tension at the air-liquid interface in the peripheral air spaces. SP-B increases the collapse pressure of palmitic acid to nearly 70 millinewtons per meter. This chain is Pulmonary surfactant-associated protein B (SFTPB), found in Sus scrofa (Pig).